Consider the following 426-residue polypeptide: Probable auxin efflux carrier component 9 (426 aa).

Residues 1–6 lie on the Extracellular side of the membrane; that stretch reads MITGSE. The chain crosses the membrane as a helical span at residues 7 to 27; sequence VYQVVEAMAPLYTAAALGYGS. The Cytoplasmic portion of the chain corresponds to 28–38; that stretch reads VRWLKAFSNEQ. A helical transmembrane segment spans residues 39–59; that stretch reads CAGINHFVALYAVPVLIFDMV. Residue valine 51 participates in (indol-3-yl)acetate binding. Over 60 to 70 the chain is Extracellular; the sequence is STNNVYKMNGR. Residues 71–91 traverse the membrane as a helical segment; that stretch reads LIAADTLQKAVLLLGLMAWAL. Residues 92-114 are Cytoplasmic-facing; that stretch reads WERSRARGAGAKAKAAVSSPLQW. A helical transmembrane segment spans residues 115 to 135; the sequence is VITCFSVASLPNTIIMGVPLL. Positions 126 and 128 each coordinate (indol-3-yl)acetate. Topologically, residues 136–145 are extracellular; sequence NGMYGPVSKD. The helical transmembrane segment at 146-166 threads the bilayer; it reads LMKQIVVMQFCIWYNVIIFLY. (indol-3-yl)acetate is bound at residue tyrosine 159. Residues 167–286 are Cytoplasmic-facing; the sequence is EYMAARRSAS…LLQIPNTYAS (120 aa). Positions 232–258 are disordered; the sequence is RDGVSGETTAAAKEVSSGEVAPVEEEE. Residues 287 to 307 traverse the membrane as a helical segment; the sequence is FLGLIWSLIAFKCGFSMPKIV. The Extracellular portion of the chain corresponds to 308–310; the sequence is EDS. The chain crosses the membrane as a helical span at residues 311–331; that stretch reads LFTIRTTAVGLSMFSSGTFIA. The Cytoplasmic portion of the chain corresponds to 332 to 347; the sequence is RQSRFVPCGYKIASFS. The chain crosses the membrane as a helical span at residues 348-368; it reads MVIKFLIGPVVMLFASLVIGM. Topologically, residues 369–371 are extracellular; the sequence is HGT. Residues 372–392 form a helical membrane-spanning segment; that stretch reads LLHIAVVQAALPLAVTSFVYA. Valine 386 serves as a coordination point for (indol-3-yl)acetate. The Cytoplasmic segment spans residues 393 to 405; sequence EEYKVHADIMSTG. A helical membrane pass occupies residues 406–426; that stretch reads VILGIFISLPVTIVYYILLGL.

The protein belongs to the auxin efflux carrier (TC 2.A.69.1) family. In terms of assembly, homodimer. In terms of tissue distribution, expressed in roots, leaves and shoot apex. Expressed in roots, stem bases, stems, leaves and young panicles.

It localises to the membrane. In terms of biological role, may act as a component of the auxin efflux carrier. This is Probable auxin efflux carrier component 9 from Oryza sativa subsp. japonica (Rice).